Here is a 518-residue protein sequence, read N- to C-terminus: Glutamate--cysteine ligase (518 aa).

Belongs to the glutamate--cysteine ligase type 1 family. Type 1 subfamily.

It catalyses the reaction L-cysteine + L-glutamate + ATP = gamma-L-glutamyl-L-cysteine + ADP + phosphate + H(+). It functions in the pathway sulfur metabolism; glutathione biosynthesis; glutathione from L-cysteine and L-glutamate: step 1/2. The protein is Glutamate--cysteine ligase (gshA) of Buchnera aphidicola subsp. Acyrthosiphon pisum (strain APS) (Acyrthosiphon pisum symbiotic bacterium).